Here is a 218-residue protein sequence, read N- to C-terminus: Sodium channel regulatory subunit beta-1 (218 aa).

The signal sequence occupies residues 1-18 (MGRLLALVVGAALVSSAC). Residues 19 to 157 (GGCVEVDSET…DKANRDMASI (139 aa)) lie on the Extracellular side of the membrane. Cystine bridges form between Cys21–Cys43 and Cys40–Cys121. The region spanning 22–150 (VEVDSETEAV…KIHIEVVDKA (129 aa)) is the Ig-like C2-type domain. 4 N-linked (GlcNAc...) asparagine glycosylation sites follow: Asn93, Asn110, Asn114, and Asn135. Residues 158–179 (VSEIMMYVLIVVLTIWLVAEMI) form a helical membrane-spanning segment. Residues 180-218 (YCYKKIAAATETAAQENASEYLAITSESKENCTGVQVAE) are Cytoplasmic-facing.

The protein belongs to the sodium channel auxiliary subunit SCN1B (TC 8.A.17) family. In terms of assembly, voltage-gated sodium (Nav) channel consists of an ion-conducting pore-forming alpha subunit functional on its own that is regulated by one or more beta subunits. Interacts with SCN1A; regulatory subunit of SCN1A/Nav1.1. Interacts with SCN3A; regulatory subunit of SCN3A/Nav1.3. Interacts with SCN4A; regulatory subunit of SCN4A/Nav1.4. Interacts with SCN5A; regulatory subunit of SCN5A/Nav1.5. Interacts with SCN8A; regulatory subunit of SCN8A/Nav1.6. Interacts with SCN9A; regulatory subunit of SCN9A/Nav1.7. Interacts with SCN10A; regulatory subunit of SCN10A/Nav1.8. Interacts with NFASC. Interacts with TMEM65. In terms of tissue distribution, the overall expression of isoform 1 and isoform 2 is very similar. Isoform 1 is abundantly expressed in skeletal muscle, heart and brain. Isoform 2 is highly expressed in brain and skeletal muscle and present at a very low level in heart, placenta, lung, liver, kidney and pancreas. In brain, isoform 2 is most abundant in the cerebellum, followed by the cerebral cortex and occipital lobe, while isoform 1 levels are higher in the cortex compared to the cerebellum. Isoform 2 is expressed in many regions of the brain, including cerebellar Purkinje cells, cortex pyramidal neurons and many of the neuronal fibers throughout the brain (at protein level). Also detected in dorsal root ganglion, in fibers of the spinal nerve and in cortical neurons and their processes (at protein level).

The protein localises to the cell membrane. It localises to the perikaryon. The protein resides in the cell projection. Its subcellular location is the axon. It is found in the secreted. Its function is as follows. Regulatory subunit of multiple voltage-gated sodium (Nav) channels directly mediating the depolarization of excitable membranes. Navs, also called VGSCs (voltage-gated sodium channels) or VDSCs (voltage-dependent sodium channels), operate by switching between closed and open conformations depending on the voltage difference across the membrane. In the open conformation they allow Na(+) ions to selectively pass through the pore, along their electrochemical gradient. The influx of Na+ ions provokes membrane depolarization, initiating the propagation of electrical signals throughout cells and tissues. The accessory beta subunits participate in localization and functional modulation of the Nav channels. Modulates the activity of SCN1A/Nav1.1, SCN2A/Nav1.2, SCN3A/Nav1.3, SCN4A/Nav1.4, SCN5A/Nav1.5, SCN8A/Nav1.6, SCN9A/Nav1.7 and SCN10A/Nav1.8. In terms of biological role, cell adhesion molecule that plays a critical role in neuronal migration and pathfinding during brain development. Stimulates neurite outgrowth. Has no regulatory function on the SCN2A sodium channel complex. In Homo sapiens (Human), this protein is Sodium channel regulatory subunit beta-1.